The primary structure comprises 295 residues: GTPase Era (295 aa).

The 170-residue stretch at lysine 7–tryptophan 176 folds into the Era-type G domain. The segment at glycine 15–serine 22 is G1. Glycine 15–serine 22 contacts GTP. Residues glutamine 41 to serine 45 form a G2 region. Residues aspartate 62–glycine 65 are G3. GTP is bound by residues aspartate 62 to isoleucine 66 and asparagine 124 to aspartate 127. A G4 region spans residues asparagine 124–aspartate 127. The interval isoleucine 152 to alanine 154 is G5. The 78-residue stretch at leucine 204 to glutamate 281 folds into the KH type-2 domain.

Belongs to the TRAFAC class TrmE-Era-EngA-EngB-Septin-like GTPase superfamily. Era GTPase family. Monomer.

It localises to the cytoplasm. The protein localises to the cell inner membrane. Its function is as follows. An essential GTPase that binds both GDP and GTP, with rapid nucleotide exchange. Plays a role in 16S rRNA processing and 30S ribosomal subunit biogenesis and possibly also in cell cycle regulation and energy metabolism. This chain is GTPase Era, found in Rickettsia bellii (strain RML369-C).